Reading from the N-terminus, the 160-residue chain is uncharacterized protein (160 aa).

In terms of domain architecture, N-acetyltransferase spans 7 to 151 (LLINYKTLEE…NPLIWHPDMD (145 aa)).

This is an uncharacterized protein from Bacillus subtilis (strain 168).